Here is a 257-residue protein sequence, read N- to C-terminus: Small ribosomal subunit protein uS4c (257 aa).

2 consecutive S4 RNA-binding domains span residues 110-170 (MRLD…QLVN) and 189-255 (KTLP…KNYL).

It belongs to the universal ribosomal protein uS4 family. Part of the 30S ribosomal subunit. Contacts protein S5. The interaction surface between S4 and S5 is involved in control of translational fidelity.

It is found in the plastid. It localises to the chloroplast. Functionally, one of the primary rRNA binding proteins, it binds directly to 16S rRNA where it nucleates assembly of the body of the 30S subunit. Its function is as follows. With S5 and S12 plays an important role in translational accuracy. This is Small ribosomal subunit protein uS4c (rps4) from Chlamydomonas reinhardtii (Chlamydomonas smithii).